The chain runs to 426 residues: D-tagatose-1,6-bisphosphate aldolase subunit KbaZ (426 aa).

This sequence belongs to the GatZ/KbaZ family. KbaZ subfamily. As to quaternary structure, forms a complex with KbaY.

Its pathway is carbohydrate metabolism; D-tagatose 6-phosphate degradation; D-glyceraldehyde 3-phosphate and glycerone phosphate from D-tagatose 6-phosphate: step 2/2. Functionally, component of the tagatose-1,6-bisphosphate aldolase KbaYZ that is required for full activity and stability of the Y subunit. Could have a chaperone-like function for the proper and stable folding of KbaY. When expressed alone, KbaZ does not show any aldolase activity. This is D-tagatose-1,6-bisphosphate aldolase subunit KbaZ from Escherichia coli (strain K12 / MC4100 / BW2952).